Here is a 1477-residue protein sequence, read N- to C-terminus: Oligomycin resistance ATP-dependent permease YOR1 (1477 aa).

The segment at 1–48 (MTITVGDAVSETELENKSQNVVLSPKASASSDISTDVDKDTSSSWDDK) is disordered. Residues 1-206 (MTITVGDAVS…RALLFTFKKQ (206 aa)) are Cytoplasmic-facing. S10 and S24 each carry phosphoserine. Basic and acidic residues predominate over residues 36-48 (DVDKDTSSSWDDK). T53 is subject to Phosphothreonine. Residues 71-73 (DIE) carry the Diacidic ER export motif DxE motif. A helical transmembrane segment spans residues 207-227 (YFMSIVFAILANCTSGFNPMI). The region spanning 207–493 (YFMSIVFAIL…LPIAIGTGID (287 aa)) is the ABC transmembrane type-1 1 domain. The Extracellular portion of the chain corresponds to 228-249 (TKRLIEFVEEKAIFHSMHVNKG). A helical membrane pass occupies residues 250-270 (IGYAIGACLMMFVNGLTFNHF). The Cytoplasmic segment spans residues 271–328 (FHTSQLTGVQAKSILTKAAMKKMFNASNYARHCFPNGKVTSFVTTDLARIEFALSFQP). A helical membrane pass occupies residues 329–349 (FLAGFPAILAICIVLLIVNLG). The Extracellular portion of the chain corresponds to 350–357 (PIALVGIG). The chain crosses the membrane as a helical span at residues 358 to 370 (IFFGGFFISLFAF). Residues 371–433 (KLILGFRIAA…KVRKMQLSRN (63 aa)) lie on the Cytoplasmic side of the membrane. Residues 434-454 (FLIAMAMSLPSIASLVTFLAM) form a helical membrane-spanning segment. Residues 455-478 (YKVNKGGRQPGNIFASLSLFQVLS) are Extracellular-facing. The helical transmembrane segment at 479 to 499 (LQMFFLPIAIGTGIDMIIGLG) threads the bilayer. Topologically, residues 500 to 615 (RLQSLLEAPE…DLNFDIKKGE (116 aa)) are cytoplasmic. Residues 552-595 (KGEAKDEGKKNKKKRKDTWGKPSASTNKAKRLDNMLKDRDGPED) form a disordered region. The span at 581–595 (KRLDNMLKDRDGPED) shows a compositional bias: basic and acidic residues. Residues 581–808 (KRLDNMLKDR…NQTLINLLQF (228 aa)) form the ABC transporter 1 domain. A helical transmembrane segment spans residues 616–636 (FIMITGPIGTGKSSLLNAMAG). 621–628 (GPIGTGKS) provides a ligand contact to ATP. At 637-892 (SMRKTDGKVE…EYIKAAVGKW (256 aa)) the chain is on the extracellular side. N-linked (GlcNAc...) asparagine glycans are attached at residues N661, N759, and N799. Residues 893–913 (GFIALPLYAILVVGTTFCSLF) form a helical membrane-spanning segment. An ABC transmembrane type-1 2 domain is found at 897–1175 (LPLYAILVVG…ILRAMTQTEN (279 aa)). Residues 914–940 (SSVWLSYWTENKFKNRPPSFYMGLYSF) are Cytoplasmic-facing. The helical transmembrane segment at 941 to 961 (FVFAAFIFMNGQFTILCAMGI) threads the bilayer. Residues 962-1027 (MASKWLNLRA…ANIVGVCVMC (66 aa)) lie on the Extracellular side of the membrane. Residues 1028 to 1048 (IVYLPWFAIAIPFLLVIFVLI) form a helical membrane-spanning segment. The Cytoplasmic segment spans residues 1049–1117 (ADHYQSSGRE…GYLVVVLQRW (69 aa)). The chain crosses the membrane as a helical span at residues 1118 to 1138 (VGIFLDMVAIAFALIITLLCV). Topologically, residues 1139–1141 (TRA) are extracellular. The helical transmembrane segment at 1142-1162 (FPISAASVGVLLTYVLQLPGL) threads the bilayer. Residues 1163–1477 (LNTILRAMTQ…IVENDFENRS (315 aa)) lie on the Cytoplasmic side of the membrane. The 252-residue stretch at 1213–1464 (IIFENVDFAY…EDSIFRSMCS (252 aa)) folds into the ABC transporter 2 domain. 1247 to 1254 (GRTGAGKS) serves as a coordination point for ATP.

It belongs to the ABC transporter superfamily. ABCC family. Conjugate transporter (TC 3.A.1.208) subfamily.

It is found in the cell membrane. The catalysed reaction is a 1,2-diacyl-sn-glycero-3-phosphoethanolamine(in) + ATP + H2O = a 1,2-diacyl-sn-glycero-3-phosphoethanolamine(out) + ADP + phosphate + H(+). The enzyme catalyses Cd(2+)(in) + ATP + H2O = Cd(2+)(out) + ADP + phosphate + H(+). It carries out the reaction an S-substituted glutathione(in) + ATP + H2O = an S-substituted glutathione(out) + ADP + phosphate + H(+). Its function is as follows. Functions as a pleiotropic drug pump at the plasma membrane to clear toxic substances from the cytosol. Organic anion transporter involved in the detoxification of a wide range of toxic environmental organic anions that contain carboxyl groups. Required for tolerance to reveromycin A, tautomycin and leptomycin B. Required for oligomycin resistance. Required for rhodamine B resistance. Mediates the ATP-dependent efflux of rhodamine B. Involved in cadmium detoxification. Displays an energy-dependent efflux of cadmium and glutathione, suggesting that YOR1 transports both compounds as a bis-glutathionato-cadmium Cd-(GS)(2) complex. Confers resistance to rhodamine 6G and to doxorubicin. This chain is Oligomycin resistance ATP-dependent permease YOR1, found in Saccharomyces cerevisiae (strain ATCC 204508 / S288c) (Baker's yeast).